The following is a 156-amino-acid chain: Small ribosomal subunit protein uS7 (156 aa).

Belongs to the universal ribosomal protein uS7 family. In terms of assembly, part of the 30S ribosomal subunit. Contacts proteins S9 and S11.

One of the primary rRNA binding proteins, it binds directly to 16S rRNA where it nucleates assembly of the head domain of the 30S subunit. Is located at the subunit interface close to the decoding center, probably blocks exit of the E-site tRNA. The sequence is that of Small ribosomal subunit protein uS7 from Salmonella choleraesuis (strain SC-B67).